Reading from the N-terminus, the 152-residue chain is Small ribosomal subunit protein uS13 (152 aa).

It belongs to the universal ribosomal protein uS13 family. In terms of assembly, part of the 30S ribosomal subunit. Forms a loose heterodimer with protein S19. Forms two bridges to the 50S subunit in the 70S ribosome.

Functionally, located at the top of the head of the 30S subunit, it contacts several helices of the 16S rRNA. In the 70S ribosome it contacts the 23S rRNA (bridge B1a) and protein L5 of the 50S subunit (bridge B1b), connecting the 2 subunits; these bridges are implicated in subunit movement. This Pyrobaculum arsenaticum (strain DSM 13514 / JCM 11321 / PZ6) protein is Small ribosomal subunit protein uS13.